Here is a 439-residue protein sequence, read N- to C-terminus: Adenylosuccinate synthetase (439 aa).

GTP-binding positions include 25–31 and 53–55; these read GDEGKGK and GHT. Residue Asp26 is the Proton acceptor of the active site. Mg(2+) contacts are provided by Asp26 and Gly53. Residues 26-29, 51-54, Thr146, Arg160, Asn237, Thr252, and Arg316 contribute to the IMP site; these read DEGK and NAGH. The active-site Proton donor is His54. Position 312–318 (312–318) interacts with substrate; that stretch reads VTTGRRR. Residues Arg318, 344–346, and 426–428 contribute to the GTP site; these read KLD and GVG.

It belongs to the adenylosuccinate synthetase family. In terms of assembly, homodimer. Mg(2+) serves as cofactor.

It is found in the cytoplasm. The catalysed reaction is IMP + L-aspartate + GTP = N(6)-(1,2-dicarboxyethyl)-AMP + GDP + phosphate + 2 H(+). The protein operates within purine metabolism; AMP biosynthesis via de novo pathway; AMP from IMP: step 1/2. In terms of biological role, plays an important role in the de novo pathway and in the salvage pathway of purine nucleotide biosynthesis. Catalyzes the first committed step in the biosynthesis of AMP from IMP. This Mycosarcoma maydis (Corn smut fungus) protein is Adenylosuccinate synthetase.